We begin with the raw amino-acid sequence, 665 residues long: Methionine--tRNA ligase (665 aa).

The 'HIGH' region signature appears at 12–22; sequence YYPSGKLHIGS. The 'KMSKS' region motif lies at 308–312; that stretch reads KMSKS. Position 311 (K311) interacts with ATP. Residues 562 to 665 enclose the tRNA-binding domain; the sequence is TFDAVEIRVA…PSVPNGSIIG (104 aa).

It belongs to the class-I aminoacyl-tRNA synthetase family. MetG type 2B subfamily. In terms of assembly, homodimer.

The protein resides in the cytoplasm. The catalysed reaction is tRNA(Met) + L-methionine + ATP = L-methionyl-tRNA(Met) + AMP + diphosphate. In terms of biological role, is required not only for elongation of protein synthesis but also for the initiation of all mRNA translation through initiator tRNA(fMet) aminoacylation. This Streptococcus pyogenes serotype M6 (strain ATCC BAA-946 / MGAS10394) protein is Methionine--tRNA ligase (metG).